Here is a 232-residue protein sequence, read N- to C-terminus: Uridylate kinase (232 aa).

13–14 serves as a coordination point for ATP; that stretch reads GS. G52 is a UMP binding site. ATP contacts are provided by G53 and R57. UMP contacts are provided by residues D74 and 122-128; that span reads LQPGQST. ATP contacts are provided by T147, Y153, and D156.

Belongs to the UMP kinase family. As to quaternary structure, homohexamer.

It is found in the cytoplasm. The enzyme catalyses UMP + ATP = UDP + ADP. The protein operates within pyrimidine metabolism; CTP biosynthesis via de novo pathway; UDP from UMP (UMPK route): step 1/1. With respect to regulation, inhibited by UTP. In terms of biological role, catalyzes the reversible phosphorylation of UMP to UDP. This chain is Uridylate kinase, found in Thermofilum pendens (strain DSM 2475 / Hrk 5).